Consider the following 337-residue polypeptide: Alanine racemase (337 aa).

K33 acts as the Proton acceptor; specific for D-alanine in catalysis. K33 bears the N6-(pyridoxal phosphate)lysine mark. R118 is a substrate binding site. Y246 functions as the Proton acceptor; specific for L-alanine in the catalytic mechanism. M292 is a binding site for substrate.

This sequence belongs to the alanine racemase family. Pyridoxal 5'-phosphate is required as a cofactor.

The catalysed reaction is L-alanine = D-alanine. It participates in amino-acid biosynthesis; D-alanine biosynthesis; D-alanine from L-alanine: step 1/1. Its function is as follows. Catalyzes the interconversion of L-alanine and D-alanine. May also act on other amino acids. This is Alanine racemase (alr) from Campylobacter curvus (strain 525.92).